A 214-amino-acid polypeptide reads, in one-letter code: Orotate phosphoribosyltransferase (214 aa).

Lys26 contacts 5-phospho-alpha-D-ribose 1-diphosphate. Residue 34–35 (FF) coordinates orotate. 5-phospho-alpha-D-ribose 1-diphosphate-binding positions include 72–73 (YK), Arg99, Lys100, Lys103, His105, and 124–132 (DDVITAGTA). The orotate site is built by Thr128 and Arg157.

Belongs to the purine/pyrimidine phosphoribosyltransferase family. PyrE subfamily. Homodimer. Mg(2+) serves as cofactor.

The catalysed reaction is orotidine 5'-phosphate + diphosphate = orotate + 5-phospho-alpha-D-ribose 1-diphosphate. The protein operates within pyrimidine metabolism; UMP biosynthesis via de novo pathway; UMP from orotate: step 1/2. Catalyzes the transfer of a ribosyl phosphate group from 5-phosphoribose 1-diphosphate to orotate, leading to the formation of orotidine monophosphate (OMP). The polypeptide is Orotate phosphoribosyltransferase (Pseudomonas fluorescens (strain SBW25)).